The following is a 160-amino-acid chain: MKITHHCLVSLLSILLLSGFAFSHHISLDEFESHPSTSRALLQAKATCKEDFAAKNYTIITSKCKGPNYPAKVCCSAFKDFACPFAEVLNDEKTDCASTMFSYINLYGRYPPGIFANMCKEGKEGLDCTDVTPTSSSHASIPLVSTHVLLITVSILFHLF.

The first 23 residues, 1-23 (MKITHHCLVSLLSILLLSGFAFS), serve as a signal peptide directing secretion. Residue Asn-56 is glycosylated (N-linked (GlcNAc...) asparagine). A lipid anchor (GPI-anchor amidated serine) is attached at Ser-137. A propeptide spans 138–160 (HASIPLVSTHVLLITVSILFHLF) (removed in mature form).

As to expression, expressed in pollen, pollen tubes, sporophytic pistil tissues, in the early stages of female gametophyte development, and in unfertilized, mature ovules.

The protein localises to the cell membrane. This chain is GPI-anchored protein LLG3, found in Arabidopsis thaliana (Mouse-ear cress).